The chain runs to 437 residues: GTPase Obg (437 aa).

In terms of domain architecture, Obg spans serine 2–leucine 160. Positions alanine 161–alanine 338 constitute an OBG-type G domain. GTP is bound by residues glycine 167–serine 174, phenylalanine 192–valine 196, aspartate 214–glycine 217, asparagine 284–aspartate 287, and serine 319–leucine 321. Positions 174 and 194 each coordinate Mg(2+). One can recognise an OCT domain in the interval glycine 359–aspartate 437.

Belongs to the TRAFAC class OBG-HflX-like GTPase superfamily. OBG GTPase family. As to quaternary structure, monomer. Mg(2+) is required as a cofactor.

It is found in the cytoplasm. In terms of biological role, an essential GTPase which binds GTP, GDP and possibly (p)ppGpp with moderate affinity, with high nucleotide exchange rates and a fairly low GTP hydrolysis rate. Plays a role in control of the cell cycle, stress response, ribosome biogenesis and in those bacteria that undergo differentiation, in morphogenesis control. This Streptococcus pyogenes serotype M49 (strain NZ131) protein is GTPase Obg.